The primary structure comprises 505 residues: Aspartyl/glutamyl-tRNA(Asn/Gln) amidotransferase subunit B (505 aa).

It belongs to the GatB/GatE family. GatB subfamily. As to quaternary structure, heterotrimer of A, B and C subunits.

It catalyses the reaction L-glutamyl-tRNA(Gln) + L-glutamine + ATP + H2O = L-glutaminyl-tRNA(Gln) + L-glutamate + ADP + phosphate + H(+). The enzyme catalyses L-aspartyl-tRNA(Asn) + L-glutamine + ATP + H2O = L-asparaginyl-tRNA(Asn) + L-glutamate + ADP + phosphate + 2 H(+). Functionally, allows the formation of correctly charged Asn-tRNA(Asn) or Gln-tRNA(Gln) through the transamidation of misacylated Asp-tRNA(Asn) or Glu-tRNA(Gln) in organisms which lack either or both of asparaginyl-tRNA or glutaminyl-tRNA synthetases. The reaction takes place in the presence of glutamine and ATP through an activated phospho-Asp-tRNA(Asn) or phospho-Glu-tRNA(Gln). The sequence is that of Aspartyl/glutamyl-tRNA(Asn/Gln) amidotransferase subunit B from Corynebacterium jeikeium (strain K411).